A 178-amino-acid polypeptide reads, in one-letter code: ATP-dependent protease subunit HslV (178 aa).

Threonine 7 is an active-site residue. Glycine 162, cysteine 165, and threonine 168 together coordinate Na(+).

Belongs to the peptidase T1B family. HslV subfamily. In terms of assembly, a double ring-shaped homohexamer of HslV is capped on each side by a ring-shaped HslU homohexamer. The assembly of the HslU/HslV complex is dependent on binding of ATP.

The protein localises to the cytoplasm. It carries out the reaction ATP-dependent cleavage of peptide bonds with broad specificity.. Its activity is regulated as follows. Allosterically activated by HslU binding. In terms of biological role, protease subunit of a proteasome-like degradation complex believed to be a general protein degrading machinery. In Cupriavidus metallidurans (strain ATCC 43123 / DSM 2839 / NBRC 102507 / CH34) (Ralstonia metallidurans), this protein is ATP-dependent protease subunit HslV.